A 493-amino-acid chain; its full sequence is Galactose-1-phosphate uridylyltransferase (493 aa).

The protein belongs to the galactose-1-phosphate uridylyltransferase type 2 family.

Its subcellular location is the cytoplasm. The enzyme catalyses alpha-D-galactose 1-phosphate + UDP-alpha-D-glucose = alpha-D-glucose 1-phosphate + UDP-alpha-D-galactose. It functions in the pathway carbohydrate metabolism; galactose metabolism. This is Galactose-1-phosphate uridylyltransferase from Streptococcus salivarius.